The following is a 286-amino-acid chain: 3-amino-tetrahydro-pyrrolizinone reductase (286 aa).

Tyrosine 146 (proton acceptor) is an active-site residue.

Belongs to the short-chain dehydrogenases/reductases (SDR) family.

It carries out the reaction 3-amino-5,6,7,7a-tetrahydro-1H-pyrrolizin-1-one + AH2 = 3-amino-tetrahydro-1H-pyrrolizin-1-ol + A. Functionally, involved in the biosynthetic pathway of pyrrolizwilline, a pyrrolizidine alkaloid. Catalyzes the reduction of 3-amino-tetrahydro-pyrrolizinone to 3-amino-tetrahydro-pyrrolizinol. In Xenorhabdus hominickii, this protein is 3-amino-tetrahydro-pyrrolizinone reductase (xhpD).